The sequence spans 20 residues: Cathepsin L1 (20 aa).

Over residues 1–10 (AVPDKIDPRE) the composition is skewed to basic and acidic residues. The interval 1-20 (AVPDKIDPRESGYVTGVKDQ) is disordered.

Belongs to the peptidase C1 family. In terms of assembly, dimer of a heavy and a light chain linked by disulfide bonds.

It localises to the lysosome. It carries out the reaction Specificity close to that of papain. As compared to cathepsin B, cathepsin L exhibits higher activity toward protein substrates, but has little activity on Z-Arg-Arg-NHMec, and no peptidyl-dipeptidase activity.. Functionally, thiol protease that assists the parasite in burrowing through the gut wall and liver of its mammalian host. This is Cathepsin L1 from Fasciola hepatica (Liver fluke).